The chain runs to 378 residues: MKILVDENMPYARELFSRLGDVQAVPGRPVPAEALTDADALMVRSVTRVNEALLSGKAVKFVGTATAGTDHVDQAWLQQAGIGFSAAPGCNAIAVVEYVFSSLLMLAERDGFALRDRTVGIVGVGNVGGRLQKRLEALGIKTLLCDPPRAERGDEGDFRSLDALVQEADVLTFHTPLYKEGPYKTQHLADESLISRLKPGTILINACRGPVVDNAALLKRLEAGQPLSVVLDVWEPEPDLNVELLKRVDIGTAHIAGYTLEGKARGTTQVFEAYSAFIGHPQQVALDTLLPAPEFGRITLHGPLDQPTLKRLVHLVYDVRRDDAPLRKVAGVAGEFDKLRKNYQERREWSSLYVQCSDAQAATLLRQLGFNAVHHPVR.

Substrate is bound by residues S45 and T66. The NAD(+) site is built by D146 and T175. R208 is a catalytic residue. D232 serves as a coordination point for NAD(+). E237 is an active-site residue. The active-site Proton donor is H254. G257 contacts NAD(+). Y258 is a substrate binding site.

It belongs to the D-isomer specific 2-hydroxyacid dehydrogenase family. PdxB subfamily. As to quaternary structure, homodimer.

It localises to the cytoplasm. It catalyses the reaction 4-phospho-D-erythronate + NAD(+) = (R)-3-hydroxy-2-oxo-4-phosphooxybutanoate + NADH + H(+). It participates in cofactor biosynthesis; pyridoxine 5'-phosphate biosynthesis; pyridoxine 5'-phosphate from D-erythrose 4-phosphate: step 2/5. Catalyzes the oxidation of erythronate-4-phosphate to 3-hydroxy-2-oxo-4-phosphonooxybutanoate. In Klebsiella pneumoniae (strain 342), this protein is Erythronate-4-phosphate dehydrogenase.